The chain runs to 208 residues: Urease accessory protein UreG 2 (208 aa).

16 to 23 contacts GTP; the sequence is GPVGSGKT.

Belongs to the SIMIBI class G3E GTPase family. UreG subfamily. In terms of assembly, homodimer. UreD, UreF and UreG form a complex that acts as a GTP-hydrolysis-dependent molecular chaperone, activating the urease apoprotein by helping to assemble the nickel containing metallocenter of UreC. The UreE protein probably delivers the nickel.

The protein localises to the cytoplasm. Functionally, facilitates the functional incorporation of the urease nickel metallocenter. This process requires GTP hydrolysis, probably effectuated by UreG. This is Urease accessory protein UreG 2 from Methylobacterium radiotolerans (strain ATCC 27329 / DSM 1819 / JCM 2831 / NBRC 15690 / NCIMB 10815 / 0-1).